The sequence spans 572 residues: Probable lysosomal cobalamin transporter (572 aa).

The next 9 helical transmembrane spans lie at 8–28 (VIWF…SVFI), 40–60 (FVTF…MLLP), 95–115 (IIYY…IPFA), 145–165 (TLTF…APMM), 188–208 (AFTF…AFYT), 314–334 (GGFC…MTVV), 374–394 (IIFA…VVAV), 421–441 (AVLT…LVPG), and 499–519 (VALN…LFLA). Residues 522 to 544 (GRRRGRGRESVSKHQKKRQSYMR) are disordered.

Belongs to the LIMR family. LMBRD1 subfamily.

Its subcellular location is the lysosome membrane. In terms of biological role, probable lysosomal cobalamin transporter. Required to export cobalamin from lysosomes allowing its conversion to cofactors. In Aspergillus fumigatus (strain ATCC MYA-4609 / CBS 101355 / FGSC A1100 / Af293) (Neosartorya fumigata), this protein is Probable lysosomal cobalamin transporter.